Consider the following 291-residue polypeptide: Protease HtpX homolog (291 aa).

The next 2 helical transmembrane spans lie at 4-24 (ILLF…VASL) and 39-59 (SALL…SLLI). His144 serves as a coordination point for Zn(2+). Residue Glu145 is part of the active site. His148 contacts Zn(2+). The next 2 membrane-spanning stretches (helical) occupy residues 159-179 (LIQG…GYAV) and 199-219 (VSTI…VAWF). A Zn(2+)-binding site is contributed by Glu224.

The protein belongs to the peptidase M48B family. It depends on Zn(2+) as a cofactor.

It localises to the cell inner membrane. This chain is Protease HtpX homolog, found in Polaromonas naphthalenivorans (strain CJ2).